A 550-amino-acid chain; its full sequence is Chaperonin GroEL (550 aa).

Residues 30–33, Lys-51, 87–91, Gly-415, 479–481, and Asp-495 contribute to the ATP site; these read TLGP, DGTTT, and NAA. Residues 525–550 form a disordered region; it reads PKDEKSSSELNSAPGNGMGGGMGGMM. A compositionally biased stretch (gly residues) spans 540–550; the sequence is NGMGGGMGGMM.

It belongs to the chaperonin (HSP60) family. As to quaternary structure, forms a cylinder of 14 subunits composed of two heptameric rings stacked back-to-back. Interacts with the co-chaperonin GroES.

The protein localises to the cytoplasm. The catalysed reaction is ATP + H2O + a folded polypeptide = ADP + phosphate + an unfolded polypeptide.. In terms of biological role, together with its co-chaperonin GroES, plays an essential role in assisting protein folding. The GroEL-GroES system forms a nano-cage that allows encapsulation of the non-native substrate proteins and provides a physical environment optimized to promote and accelerate protein folding. This chain is Chaperonin GroEL, found in Buchnera aphidicola subsp. Cinara cedri (strain Cc).